Consider the following 278-residue polypeptide: NH(3)-dependent NAD(+) synthetase (278 aa).

ATP is bound at residue 39-46; the sequence is GVSGGVDS. A Mg(2+)-binding site is contributed by aspartate 45. A deamido-NAD(+)-binding site is contributed by arginine 121. Residue threonine 141 coordinates ATP. A Mg(2+)-binding site is contributed by glutamate 146. Deamido-NAD(+) is bound by residues lysine 154 and aspartate 161. ATP-binding residues include lysine 170 and serine 192. Position 252-253 (252-253) interacts with deamido-NAD(+); sequence HK.

The protein belongs to the NAD synthetase family. In terms of assembly, homodimer.

The enzyme catalyses deamido-NAD(+) + NH4(+) + ATP = AMP + diphosphate + NAD(+) + H(+). It participates in cofactor biosynthesis; NAD(+) biosynthesis; NAD(+) from deamido-NAD(+) (ammonia route): step 1/1. Functionally, catalyzes the ATP-dependent amidation of deamido-NAD to form NAD. Uses ammonia as a nitrogen source. The polypeptide is NH(3)-dependent NAD(+) synthetase (Saccharolobus solfataricus (strain ATCC 35092 / DSM 1617 / JCM 11322 / P2) (Sulfolobus solfataricus)).